The following is a 326-amino-acid chain: Cyclin-dependent kinase 6 (326 aa).

Met-1 carries the post-translational modification N-acetylmethionine. Phosphotyrosine occurs at positions 13 and 24. Residues 13–300 form the Protein kinase domain; it reads YECVAEIGEG…AYGALNHPYF (288 aa). Residues 19 to 27 and Lys-43 contribute to the ATP site; that span reads IGEGAYGKV. 2 positions are modified to phosphothreonine: Thr-49 and Thr-70. Asp-145 acts as the Proton acceptor in catalysis. The residue at position 177 (Thr-177) is a Phosphothreonine. Lys-264 bears the N6-acetyllysine mark. At Ser-319 the chain carries Phosphoserine. The residue at position 325 (Thr-325) is a Phosphothreonine.

It belongs to the protein kinase superfamily. CMGC Ser/Thr protein kinase family. CDC2/CDKX subfamily. In terms of assembly, interaction with D-type G1 cyclins. Cyclin binding promotes enzyme activation by phosphorylation at Thr-177. Binds to RUNX1, CDKN2D, FBXO7 and CDKN2C/p18-INK4c. Forms a cytoplasmic complex with Hsp90/HSP90AB1 and CDC37. FBXO7-binding promotes D-type cyclin binding. Thr-177 phosphorylation and Tyr-24 dephosphorylation promotes kinase activity. In terms of tissue distribution, expressed in subgranular zone (SGZ) of the hippocampal dentate gyrus (DG) and the subventricular zone (SVZ) of the lateral ventricles whose neural precursor cells (NPC) give rise to dentate granule neurons and olfactory bulb (OB) interneurons, respectively. Expressed in the neuroepithelium of the cerebral cortex of the developing brain.

It localises to the cytoplasm. The protein resides in the nucleus. The protein localises to the cell projection. Its subcellular location is the ruffle. It is found in the cytoskeleton. It localises to the microtubule organizing center. The protein resides in the centrosome. It carries out the reaction L-seryl-[protein] + ATP = O-phospho-L-seryl-[protein] + ADP + H(+). The enzyme catalyses L-threonyl-[protein] + ATP = O-phospho-L-threonyl-[protein] + ADP + H(+). With respect to regulation, activated by Thr-177 phosphorylation and Tyr-24 dephosphorylation. Rapidly down-regulated prior to cell differentiation (e.g. erythroid and osteoblast). Its function is as follows. Serine/threonine-protein kinase involved in the control of the cell cycle and differentiation; promotes G1/S transition. Phosphorylates pRB/RB1 and NPM1. Interacts with D-type G1 cyclins during interphase at G1 to form a pRB/RB1 kinase and controls the entrance into the cell cycle. Involved in initiation and maintenance of cell cycle exit during cell differentiation; prevents cell proliferation and negatively regulates cell differentiation, but is required for the proliferation of specific cell types (e.g. erythroid and hematopoietic cells). Essential for cell proliferation within the dentate gyrus of the hippocampus and the subventricular zone of the lateral ventricles. Required during thymocyte development. Promotes the production of newborn neurons, probably by modulating G1 length. Promotes, at least in astrocytes, changes in patterns of gene expression, changes in the actin cytoskeleton including loss of stress fibers, and enhanced motility during cell differentiation. Prevents myeloid differentiation by interfering with RUNX1 and reducing its transcription transactivation activity, but promotes proliferation of normal myeloid progenitors. Delays senescence. Promotes the proliferation of beta-cells in pancreatic islets of Langerhans. May play a role in the centrosome organization during the cell cycle phases. This Mus musculus (Mouse) protein is Cyclin-dependent kinase 6 (Cdk6).